The following is a 425-amino-acid chain: 26S proteasome regulatory subunit 7 (425 aa).

208-215 (GPPGTGKT) contacts ATP.

It belongs to the AAA ATPase family.

It localises to the cytoplasm. It is found in the nucleus. Functionally, the 26S proteasome is involved in the ATP-dependent degradation of ubiquitinated proteins. The regulatory (or ATPase) complex confers ATP dependency and substrate specificity to the 26S complex. The chain is 26S proteasome regulatory subunit 7 (RPT1) from Prunus persica (Peach).